Consider the following 179-residue polypeptide: Large ribosomal subunit protein uL6 (179 aa).

It belongs to the universal ribosomal protein uL6 family. Part of the 50S ribosomal subunit.

Its function is as follows. This protein binds to the 23S rRNA, and is important in its secondary structure. It is located near the subunit interface in the base of the L7/L12 stalk, and near the tRNA binding site of the peptidyltransferase center. In Chlorobaculum tepidum (strain ATCC 49652 / DSM 12025 / NBRC 103806 / TLS) (Chlorobium tepidum), this protein is Large ribosomal subunit protein uL6.